The primary structure comprises 504 residues: Argininosuccinate lyase 2 (504 aa).

It belongs to the lyase 1 family. Argininosuccinate lyase subfamily.

It is found in the cytoplasm. It catalyses the reaction 2-(N(omega)-L-arginino)succinate = fumarate + L-arginine. It participates in amino-acid biosynthesis; L-arginine biosynthesis; L-arginine from L-ornithine and carbamoyl phosphate: step 3/3. The chain is Argininosuccinate lyase 2 from Agrobacterium fabrum (strain C58 / ATCC 33970) (Agrobacterium tumefaciens (strain C58)).